The sequence spans 570 residues: nebramycin 5' synthase (570 aa).

Positions Met1–Gly354 are kae1-like. Residue Asp12 participates in tobramycin binding. His14 functions as the Proton acceptor in the catalytic mechanism. An ATP-binding site is contributed by Lys39. His114, His118, and Asp137 together coordinate Fe cation. Carbamoyl adenylate is bound by residues Gln139, Gly168, and Glu172. Tobramycin-binding residues include Glu172 and Asp228. The carbamoyl adenylate site is built by Gly310 and Asn314. Asp338 is a binding site for Fe cation. The yrdC-like stretch occupies residues Gly367–His570. 2 residues coordinate ATP: Arg418 and Arg449. Arg418–Ala419 contributes to the carbamoyl phosphate binding site. Residues Arg498 and Asn528–Ser530 contribute to the carbamoyl phosphate site.

The protein belongs to the NodU/CmcH family. Fe(2+) serves as cofactor.

It carries out the reaction tobramycin + carbamoyl phosphate + ATP + H2O = nebramycin 5' + AMP + phosphate + diphosphate + H(+). It catalyses the reaction kanamycin A + carbamoyl phosphate + ATP + H2O = 6''-O-carbamoylkanamycin A + AMP + phosphate + diphosphate + H(+). The catalysed reaction is carbamoyl phosphate + ATP + H2O = carbamoyl adenylate + phosphate + diphosphate. The enzyme catalyses tobramycin + carbamoyl adenylate = nebramycin 5' + AMP + H(+). It carries out the reaction carbamoyl adenylate + kanamycin A = 6''-O-carbamoylkanamycin A + AMP + H(+). It functions in the pathway antibiotic biosynthesis; kanamycin biosynthesis. Its pathway is antibiotic biosynthesis; tobramycin biosynthesis. With respect to regulation, ADP inhibits the formation of nebramycin 5'. Functionally, tobZ is involved in the biosynthesis of the 2-deoxystreptamine-containing aminoglycoside antibiotics such as nebramycin 5 and 6-O-carbamoylkanamycin. Catalyzes the hydrolysis of carbamoyl phosphate and its subsequent adenylation by ATP to yield O-carbamoyladenylate. Then it catalyzes the transfer of the carbamoyl moiety from O-carbamoyladenylate to the tobramycin 6-hydroxy group to yield nebramycin 5'. It catalyzes the same reaction with kanamycin A. These reactions are considerably slower in the presence of deoxy-ATP. The sequence is that of nebramycin 5' synthase (tobZ) from Streptoalloteichus tenebrarius (strain ATCC 17920 / DSM 40477 / JCM 4838 / CBS 697.72 / NBRC 16177 / NCIMB 11028 / NRRL B-12390 / A12253. 1 / ISP 5477) (Streptomyces tenebrarius).